A 298-amino-acid polypeptide reads, in one-letter code: Ribosomal RNA processing protein 36 homolog (298 aa).

The tract at residues methionine 1–methionine 131 is disordered. Residues serine 14–glutamate 56 show a composition bias toward acidic residues. Polar residues-rich tracts occupy residues glutamine 61–serine 70 and leucine 83–leucine 92. Coiled-coil stretches lie at residues isoleucine 88 to lysine 112 and arginine 196 to leucine 228. Positions phenylalanine 98–serine 111 are enriched in basic and acidic residues. The disordered stretch occupies residues isoleucine 279–asparagine 298.

The protein belongs to the RRP36 family.

It is found in the nucleus. The protein localises to the nucleolus. Functionally, involved in the early processing steps of the pre-rRNA in the maturation pathway leading to the 18S rRNA. The protein is Ribosomal RNA processing protein 36 homolog of Dictyostelium discoideum (Social amoeba).